We begin with the raw amino-acid sequence, 583 residues long: uncharacterized protein (583 aa).

This is an uncharacterized protein from Sinorhizobium fredii (strain NBRC 101917 / NGR234).